The chain runs to 983 residues: Ephrin type-A receptor 3 (983 aa).

An N-terminal signal peptide occupies residues 1-20 (MDCHLSILVLLGCCVLSCSG). Residues 21–540 (ELSPQPSNEV…SFSISGENSH (520 aa)) lie on the Extracellular side of the membrane. Residues 29–206 (EVNLLDSKTI…YFKKCPFTVK (178 aa)) enclose the Eph LBD domain. Asn231, Asn336, Asn390, Asn403, and Asn492 each carry an N-linked (GlcNAc...) asparagine glycan. Fibronectin type-III domains follow at residues 324–434 (PPSA…TNQA) and 435–530 (APSP…TSPD). The chain crosses the membrane as a helical span at residues 541–564 (VVMIAISAAVAIIVLTVVTYVLVG). The Cytoplasmic portion of the chain corresponds to 565–983 (RFCGYHKSKH…TQSKNGPVPV (419 aa)). A phosphotyrosine; by autocatalysis mark is found at Tyr596 and Tyr602. One can recognise a Protein kinase domain in the interval 621–882 (ISIDKVVGAG…QIVSILDKLI (262 aa)). ATP-binding positions include 628-633 (GAGEFG), Lys653, and 700-706 (EYMENGS). Tyr701 carries the phosphotyrosine; by autocatalysis modification. Asp746 (proton acceptor) is an active-site residue. Position 750–751 (750–751 (RN)) interacts with ATP. Tyr779 is modified (phosphotyrosine; by autocatalysis). Residues 911-975 (ATFHTTGDWL…ISTIKALETQ (65 aa)) form the SAM domain. Tyr937 carries the phosphotyrosine modification. Positions 981 to 983 (VPV) match the PDZ-binding motif.

This sequence belongs to the protein kinase superfamily. Tyr protein kinase family. Ephrin receptor subfamily. Heterotetramer upon binding of the ligand. The heterotetramer is composed of an ephrin dimer and a receptor dimer. Oligomerization is probably required to induce biological responses. Forms a ternary EFNA5-EPHA3-ADAM10 complex mediating EFNA5 extracellular domain shedding by ADAM10 which regulates the EFNA5-EPHA3 complex internalization and function. Interacts (phosphorylated) with PTPN1; dephosphorylates EPHA3 and may regulate its trafficking and function. Interacts (phosphorylated) with CRK; mediates EFNA5-EPHA3 signaling through RHOA GTPase activation. Interacts with NCK1 (via SH2 domain); mediates EFNA5-EPHA3 signaling. In terms of processing, autophosphorylates upon activation by EFNA5. Phosphorylation on Tyr-602 mediates interaction with NCK1. Dephosphorylated by PTPN1. Greatest levels of expression occurring in the brain, also detected in testis. Expressed in myogenic progenitor cells.

The protein localises to the cell membrane. Its subcellular location is the secreted. The catalysed reaction is L-tyrosyl-[protein] + ATP = O-phospho-L-tyrosyl-[protein] + ADP + H(+). Receptor tyrosine kinase which binds promiscuously membrane-bound ephrin family ligands residing on adjacent cells, leading to contact-dependent bidirectional signaling into neighboring cells. The signaling pathway downstream of the receptor is referred to as forward signaling while the signaling pathway downstream of the ephrin ligand is referred to as reverse signaling. Highly promiscuous for ephrin-A ligands it binds preferentially EFNA5. Upon activation by EFNA5 regulates cell-cell adhesion, cytoskeletal organization and cell migration. Plays a role in cardiac cells migration and differentiation and regulates the formation of the atrioventricular canal and septum during development probably through activation by EFNA1. Involved in the retinotectal mapping of neurons. May also control the segregation but not the guidance of motor and sensory axons during neuromuscular circuit development. This chain is Ephrin type-A receptor 3 (Epha3), found in Mus musculus (Mouse).